We begin with the raw amino-acid sequence, 620 residues long: Glutathione-regulated potassium-efflux system protein KefC (620 aa).

The next 12 membrane-spanning stretches (helical) occupy residues 4-24 (HTLLQALIYLGSAALIVPIAV), 26-46 (LGLGSVLGYLIAGCIIGPWGL), 54-74 (SILHFAEIGVVLMLFVIGLEL), 90-110 (GALQMVVCGGLIGLFCMFLGL), 114-134 (VAELIGMTLALSSTAIAMQAM), 149-169 (FAVLLFQDIAAIPLVAMIPLL), 178-198 (LGAFALSALKVAGALALVVLL), 218-238 (VFSAVALFLVFGFGLLLEEVG), 270-290 (GLLLGLFFIGVGMSIDFGTLV), 294-314 (LRILLLLAGFLAIKIVMLWLV), 327-347 (WFAVLLGQGSEFAFVVFGAAQ), and 359-379 (ALTLAVALSMAATPIFLVLLT). One can recognise an RCK N-terminal domain in the interval 399-518 (QPRVIVAGFG…AGVAMPERET (120 aa)). The disordered stretch occupies residues 599-620 (QGTAEGKHSGEAADEPEVKPSI).

The protein belongs to the monovalent cation:proton antiporter 2 (CPA2) transporter (TC 2.A.37) family. KefC subfamily. Homodimer. Interacts with the regulatory subunit KefF.

Its subcellular location is the cell inner membrane. Functionally, pore-forming subunit of a potassium efflux system that confers protection against electrophiles. Catalyzes K(+)/H(+) antiport. This is Glutathione-regulated potassium-efflux system protein KefC from Salmonella dublin (strain CT_02021853).